Reading from the N-terminus, the 422-residue chain is Tyrosine--tRNA ligase (422 aa).

Tyr37 contributes to the L-tyrosine binding site. The 'HIGH' region motif lies at 42-51 (PTEESLHIGH). L-tyrosine-binding residues include Tyr175 and Gln179. The short motif at 235-239 (KFGKT) is the 'KMSKS' region element. Lys238 contributes to the ATP binding site. The S4 RNA-binding domain maps to 357–414 (KDLQEALVLTSLAQSRTQAKNMIISNSISINTEKIRKNHIFHEKDKLFGKFTLLSRGK).

It belongs to the class-I aminoacyl-tRNA synthetase family. TyrS type 1 subfamily. As to quaternary structure, homodimer.

Its subcellular location is the cytoplasm. The enzyme catalyses tRNA(Tyr) + L-tyrosine + ATP = L-tyrosyl-tRNA(Tyr) + AMP + diphosphate + H(+). Catalyzes the attachment of tyrosine to tRNA(Tyr) in a two-step reaction: tyrosine is first activated by ATP to form Tyr-AMP and then transferred to the acceptor end of tRNA(Tyr). The sequence is that of Tyrosine--tRNA ligase from Buchnera aphidicola subsp. Acyrthosiphon pisum (strain APS) (Acyrthosiphon pisum symbiotic bacterium).